Here is a 469-residue protein sequence, read N- to C-terminus: UDP-N-acetylmuramate--L-alanine ligase (469 aa).

ATP is bound at residue 119-125 (GTHGKTT).

The protein belongs to the MurCDEF family.

It localises to the cytoplasm. It catalyses the reaction UDP-N-acetyl-alpha-D-muramate + L-alanine + ATP = UDP-N-acetyl-alpha-D-muramoyl-L-alanine + ADP + phosphate + H(+). It participates in cell wall biogenesis; peptidoglycan biosynthesis. Cell wall formation. The polypeptide is UDP-N-acetylmuramate--L-alanine ligase (Ruthia magnifica subsp. Calyptogena magnifica).